We begin with the raw amino-acid sequence, 393 residues long: Synaptic vesicle membrane protein VAT-1 homolog (393 aa).

Residues 1–40 (MSDEREVAEAATGEDASSPPPKTEAASDPQHPAASEGAAA) are disordered. An N-acetylserine modification is found at serine 2. Phosphoserine occurs at positions 2, 18, 27, 35, and 44.

The protein belongs to the zinc-containing alcohol dehydrogenase family. Quinone oxidoreductase subfamily. In terms of tissue distribution, expressed in brain. Also expressed in glioblastoma cells.

Its subcellular location is the cytoplasm. It is found in the mitochondrion outer membrane. Functionally, possesses ATPase activity. Plays a part in calcium-regulated keratinocyte activation in epidermal repair mechanisms. Has no effect on cell proliferation. Negatively regulates mitochondrial fusion in cooperation with mitofusin proteins (MFN1-2). The sequence is that of Synaptic vesicle membrane protein VAT-1 homolog (VAT1) from Homo sapiens (Human).